A 1478-amino-acid chain; its full sequence is MLTAKQDEVGRELRVATGTSLIEYPVKDWLLRRQPTEWEALLGEAAIFSGQDELLWGPFVACVYREPRTTRLNCLFMDRIGVMHLHSVDVSDTSRFYPAVENLRPEYRTQVVRRCLAVGLLKKYVLLDPSAVRLIRAELPYDYDQTTAGDLANTCELVEGQAARDVGQLLVRLGLVQPRHVRSLMLDVVYENHADVVDANNKLVYYLGEQLEQLFDPLTEYSPEPTELSYRVPDQVRTSLSDEMPLMVSICEELLQLQTNFTLSLVGFLQKFLIPLRIKALNEQVPGLSTVKLNNIFPPTIDEVTRINCIFLDALKAALPYGSLEVLKACSITAPYFYKAYTRHEAATKFFSRDIKSFLSTFGKSLSDLNFYSEIKLDTLIHGPQEKLTKLKLIIDRLFDSKDWETNEEQKEADRCYRSICDVIDSFGKDEPPNTYDTRVFTPSGKILTELAKGWPAELQYKWLKRRVVGVFDVISVTDPESRDIVVIFSDYIVFLHVINGNLYYSGDSKKPLISDVLMNSLINEVPLPPKIPKLEVLSHSYIDDVVVSTYGKNSLRFDTLNAERPSSVAYTLASSSVEASYVADLCTKARILEKDTAFHLFKTAIDSFHVYSTAHESEAYKTERIKSPFVLFLNIPDSIGALQDHNATVGLFASLNKNDKVTLVRLGLDGSREESFASLDNFLSLIIEELLIFYPSYLSSATSPLFQQLMQINEQLVQTLLDPKGVHSASKSKCALRTSKKKKMPANLVSTNDNSRTLSPGTIISRTPRTISTITPKQEKRKSVGQASNSPARGSISTTPRKHKRESILGKISGLFHKKDKKENKRNSVGSDTRNRHDNGSVHILRNSSSSFRELESPRQMKRFSSVVHTAVPSSSKRRTSGISPSKGTVNLRALQDAENDDNADISKIPIPEGESLFDDTIRVDGVDADFYAQKDRLSKIYNHDLYGEVVPSAPGSKNVNVVSGATREQEKQQNTQKAIARELLASVDQQKRQPTHSAPAESQIVIPGLPQSNVPQINFGRSPSFIELFGGMRLVLDENDESVNWRRLCSERSLNEKYQIRPATYAGCISGELAPPVGIISDQRDSNLSGDNDADTPLPMHSSNKSILSDETLEKGEFERDFAISTPKSQTVSDVNARRETWGYSHSHDEEIDSEKRANTKPVSAPAPNVIPGLIITANSPTKPWHKENTRIKVSDVRSEGTDVSYISSLKKSSNRLVELSVNSQEDFEDERHTPVIEPIQNPEAPSLIENTETAPVASNSSNEETLSKLLGSQGVIDLTEETIDYSSINRKHASIQTAYPVLDDVEFSTFHMSFGDMKAEDSHLANQRESYLFSNSTIAGKKDESHGPVFYKLPDFVADDSYLGYSAVDQHAKHERNTEIGEEDEAMWVSPSKLDIFDLSKQPESVYKRTSIPAKHAELLSKMRKDGSVKFEESMFIRDNSYVYLGQFLSADEVIEQQDKKLAANTDEMDSARRL.

3 disordered regions span residues 732–889 (KSKC…PSKG), 1085–1106 (QRDSNLSGDNDADTPLPMHSSN), and 1146–1168 (YSHSHDEEIDSEKRANTKPVSAP). A compositionally biased stretch (polar residues) spans 749–761 (LVSTNDNSRTLSP). Low complexity predominate over residues 763–777 (TIISRTPRTISTITP). Polar residues predominate over residues 786–800 (GQASNSPARGSISTT). A compositionally biased stretch (basic and acidic residues) spans 1146–1160 (YSHSHDEEIDSEKRA).

It belongs to the BUD3 family.

It is found in the cell tip. The protein localises to the cell septum. Required for proper septum positioning and septum construction during septation. Acts as a landmark to mark sites for future septation, and as part of a scaffold that recruits components of the contractile ring to the site of septation. Not required to determine the site of lateral branch formation. The polypeptide is Bud site selection protein 3 homolog (BUD3) (Eremothecium gossypii (strain ATCC 10895 / CBS 109.51 / FGSC 9923 / NRRL Y-1056) (Yeast)).